The chain runs to 297 residues: UDP-N-acetylenolpyruvoylglucosamine reductase (297 aa).

The FAD-binding PCMH-type domain maps to 18–184 (QVGGPAEWYL…LSARLRLAPG (167 aa)). Residue Arg163 is part of the active site. Ser214 (proton donor) is an active-site residue. Glu285 is an active-site residue.

FAD serves as cofactor.

The protein localises to the cytoplasm. The catalysed reaction is UDP-N-acetyl-alpha-D-muramate + NADP(+) = UDP-N-acetyl-3-O-(1-carboxyvinyl)-alpha-D-glucosamine + NADPH + H(+). The protein operates within cell wall biogenesis; peptidoglycan biosynthesis. Functionally, cell wall formation. This Gloeobacter violaceus (strain ATCC 29082 / PCC 7421) protein is UDP-N-acetylenolpyruvoylglucosamine reductase.